We begin with the raw amino-acid sequence, 558 residues long: Receptor-like kinase LIP2 (558 aa).

The interval 1-45 (MHCFPCFSSPKNKKSSTTNETNDNNEPKPDDRRRAEETEEIEQSE) is disordered. A compositionally biased stretch (low complexity) spans 15 to 24 (SSTTNETNDN). A compositionally biased stretch (basic and acidic residues) spans 25–36 (NEPKPDDRRRAE). Position 53 is a phosphothreonine (threonine 53). One can recognise a Protein kinase domain in the interval 64 to 343 (FRQECLLGEG…SDVMVALSFL (280 aa)). ATP contacts are provided by residues 70-78 (LGEGGFGRV) and lysine 93. Residue tyrosine 138 is modified to Phosphotyrosine. Catalysis depends on aspartate 191, which acts as the Proton acceptor. Residues serine 195 and serine 227 each carry the phosphoserine modification. Phosphothreonine is present on threonine 233. At tyrosine 241 the chain carries Phosphotyrosine. Residues 372–558 (HDSNLVSPPP…SDVAIDSIKE (187 aa)) form a disordered region. Residues 401 to 418 (ESEKESVSKNEYKKKHEE) are compositionally biased toward basic and acidic residues. The span at 419-431 (EDSSMESDDESDS) shows a compositional bias: acidic residues. The segment covering 432–448 (NSEHEKDQPPKPIDEKN) has biased composition (basic and acidic residues). Residues 473–486 (SKSSQKSNDESTSS) show a composition bias toward low complexity. Basic and acidic residues-rich tracts occupy residues 488-500 (YDSDRDQDEKGKE), 508-524 (EEKHTHIEHIDSSKTDD), and 547-558 (IKSDVAIDSIKE).

It belongs to the protein kinase superfamily. Ser/Thr protein kinase family. Interacts with PRK6. In terms of processing, palmitoylated. As to expression, expressed in mature pollen and in germinating pollen tubes.

Its subcellular location is the cell membrane. Involved in pollen tube guidance into micropyle. Participates in perception of the ovule-secreted peptide signal LURE1. This is Receptor-like kinase LIP2 from Arabidopsis thaliana (Mouse-ear cress).